The sequence spans 147 residues: Thyrotropin subunit beta (147 aa).

The signal sequence occupies residues 1-20 (MRVVLLASGVLCLLAGQVLS). Intrachain disulfides connect Cys22-Cys72, Cys36-Cys87, Cys39-Cys126, Cys47-Cys103, Cys51-Cys105, and Cys108-Cys115. Residue Asn43 is glycosylated (N-linked (GlcNAc...) asparagine).

The protein belongs to the glycoprotein hormones subunit beta family. Heterodimer of a common alpha chain and a unique beta chain which confers biological specificity to thyrotropin, lutropin, follitropin and gonadotropin.

It localises to the secreted. Its function is as follows. Indispensable for the control of thyroid structure and metabolism. May play some role in the biological processes of the immature fishes. In Anguilla japonica (Japanese eel), this protein is Thyrotropin subunit beta (tshb).